Reading from the N-terminus, the 258-residue chain is Acyl-[acyl-carrier-protein]--UDP-N-acetylglucosamine O-acyltransferase (258 aa).

The protein belongs to the transferase hexapeptide repeat family. LpxA subfamily. In terms of assembly, homotrimer.

It localises to the cytoplasm. The catalysed reaction is a (3R)-hydroxyacyl-[ACP] + UDP-N-acetyl-alpha-D-glucosamine = a UDP-3-O-[(3R)-3-hydroxyacyl]-N-acetyl-alpha-D-glucosamine + holo-[ACP]. The protein operates within glycolipid biosynthesis; lipid IV(A) biosynthesis; lipid IV(A) from (3R)-3-hydroxytetradecanoyl-[acyl-carrier-protein] and UDP-N-acetyl-alpha-D-glucosamine: step 1/6. In terms of biological role, involved in the biosynthesis of lipid A, a phosphorylated glycolipid that anchors the lipopolysaccharide to the outer membrane of the cell. This is Acyl-[acyl-carrier-protein]--UDP-N-acetylglucosamine O-acyltransferase from Thiobacillus denitrificans (strain ATCC 25259 / T1).